Reading from the N-terminus, the 689-residue chain is Glycine--tRNA ligase beta subunit (689 aa).

The protein belongs to the class-II aminoacyl-tRNA synthetase family. As to quaternary structure, tetramer of two alpha and two beta subunits.

The protein localises to the cytoplasm. The catalysed reaction is tRNA(Gly) + glycine + ATP = glycyl-tRNA(Gly) + AMP + diphosphate. The protein is Glycine--tRNA ligase beta subunit of Escherichia coli O139:H28 (strain E24377A / ETEC).